Reading from the N-terminus, the 120-residue chain is Ribosome-binding factor A (120 aa).

It belongs to the RbfA family. Monomer. Binds 30S ribosomal subunits, but not 50S ribosomal subunits or 70S ribosomes.

It localises to the cytoplasm. Functionally, one of several proteins that assist in the late maturation steps of the functional core of the 30S ribosomal subunit. Associates with free 30S ribosomal subunits (but not with 30S subunits that are part of 70S ribosomes or polysomes). Required for efficient processing of 16S rRNA. May interact with the 5'-terminal helix region of 16S rRNA. In Chlamydia pneumoniae (Chlamydophila pneumoniae), this protein is Ribosome-binding factor A.